We begin with the raw amino-acid sequence, 595 residues long: uncharacterized protein (595 aa).

Residues 112–180 (VRPPGYDPES…KDVFGRALPT (69 aa)) form a disordered region. Basic and acidic residues-rich tracts occupy residues 120 to 133 (ESAK…EKHK) and 161 to 174 (RTQE…KDVF). The CCHC-type; degenerate zinc finger occupies 211–228 (VKCLRCGNFGHQSGDRDC). 2 disordered regions span residues 254–290 (HTDP…IVAE) and 310–595 (KSMS…RRRN). Positions 256-267 (DPSEPLKWELKQ) are enriched in basic and acidic residues. Composition is skewed to basic residues over residues 316–331 (KKRK…KHSS) and 351–364 (RGSK…KKSK). Composition is skewed to basic and acidic residues over residues 414–428 (HYYD…EIVD), 470–539 (VSEK…HVYE), and 547–565 (FSDR…ESNR). A compositionally biased stretch (basic residues) spans 584-595 (RKHRYSTNRRRN).

This is an uncharacterized protein from Arabidopsis thaliana (Mouse-ear cress).